We begin with the raw amino-acid sequence, 59 residues long: ATP synthase subunit J, mitochondrial (59 aa).

Residues 9–25 (ILKVYWPFFVAGAAVYY) form a helical membrane-spanning segment.

Belongs to the ATPase j subunit family. In terms of assembly, F-type ATPases have 2 components, CF(1) - the catalytic core - and CF(0) - the membrane proton channel. In yeast, the dimeric form of ATP synthase consists of 17 polypeptides: alpha, beta, gamma, delta, epsilon, 4 (B), 5 (OSCP), 6 (A), 8, 9 (C), d, E (Tim11), f, g, h, i/j and k.

It localises to the mitochondrion membrane. Functionally, mitochondrial membrane ATP synthase (F(1)F(0) ATP synthase or Complex V) produces ATP from ADP in the presence of a proton gradient across the membrane which is generated by electron transport complexes of the respiratory chain. F-type ATPases consist of two structural domains, F(1) - containing the extramembraneous catalytic core and F(0) - containing the membrane proton channel, linked together by a central stalk and a peripheral stalk. During catalysis, ATP synthesis in the catalytic domain of F(1) is coupled via a rotary mechanism of the central stalk subunits to proton translocation. Part of the complex F(0) domain. Minor subunit located with subunit a in the membrane. The chain is ATP synthase subunit J, mitochondrial (ATP18) from Saccharomyces cerevisiae (strain ATCC 204508 / S288c) (Baker's yeast).